We begin with the raw amino-acid sequence, 453 residues long: MDATRRDLPPGSVVRRRTDRIADVLRAETTGGALLLAGAVIALIWANSPGAAGYDAMRSFTVGPAWLHLDLSLAAWAKDGLLAVFFFVAGLELKREFVTGELRQPRRAAVPIAAAVGGVLAPAAVYVLITAAAEADALRGWAIPAATDIAFALAVLAVIGRHLPPAVRVFLLTLAVVDDLIAIMIIAVFYTANLSVTPLLATALPLVAFAILLRRRVTSVWLLLPLALTTWALVHASGVHATVAGVLLALVVPARPHSQHEHTAAPSLLERFEHAIKPVSAGLAVPVFALMSAGVAIGGLGGLVSALTDPVAIGVIAGLVIGKPLGVIAVTWLVTRLTRTGLGNNLTWTHITGLSMLAGIGFTVSLLIGELSFAAGTERHDHVKIAIVTGSLIAAVLAAVILRLPNRAGSRGNDATTRDPDQTRVGTATQRTTPDHPTPAATDANQPARSPAP.

11 helical membrane passes run 32–52 (GALL…PGAA), 71–91 (LSLA…VAGL), 109–129 (AVPI…YVLI), 140–160 (GWAI…AVIG), 169–189 (VFLL…IAVF), 193–213 (NLSV…AILL), 232–252 (ALVH…ALVV), 284–304 (AVPV…GGLV), 310–330 (PVAI…VIAV), 356–376 (MLAG…FAAG), and 382–402 (HVKI…AVIL). The tract at residues 409 to 453 (GSRGNDATTRDPDQTRVGTATQRTTPDHPTPAATDANQPARSPAP) is disordered.

Belongs to the NhaA Na(+)/H(+) (TC 2.A.33) antiporter family.

It is found in the cell membrane. The enzyme catalyses Na(+)(in) + 2 H(+)(out) = Na(+)(out) + 2 H(+)(in). Functionally, na(+)/H(+) antiporter that extrudes sodium in exchange for external protons. In Salinispora tropica (strain ATCC BAA-916 / DSM 44818 / JCM 13857 / NBRC 105044 / CNB-440), this protein is Na(+)/H(+) antiporter NhaA 2.